The primary structure comprises 311 residues: Ribosomal RNA small subunit methyltransferase H (311 aa).

Residues 34 to 36, Asp-54, Phe-78, Asp-100, and Gln-107 each bind S-adenosyl-L-methionine; that span reads GGH.

The protein belongs to the methyltransferase superfamily. RsmH family.

Its subcellular location is the cytoplasm. The enzyme catalyses cytidine(1402) in 16S rRNA + S-adenosyl-L-methionine = N(4)-methylcytidine(1402) in 16S rRNA + S-adenosyl-L-homocysteine + H(+). Its function is as follows. Specifically methylates the N4 position of cytidine in position 1402 (C1402) of 16S rRNA. The chain is Ribosomal RNA small subunit methyltransferase H from Hamiltonella defensa subsp. Acyrthosiphon pisum (strain 5AT).